We begin with the raw amino-acid sequence, 367 residues long: Chorismate synthase (367 aa).

Residues 39–60 (EEFSHDLQRRASGKSRHTSARR) are disordered. NADP(+) is bound by residues R48 and R54. Residues 125 to 127 (RSS), 238 to 239 (NA), G278, 293 to 297 (KPTSS), and R319 each bind FMN.

The protein belongs to the chorismate synthase family. Homotetramer. FMNH2 serves as cofactor.

It carries out the reaction 5-O-(1-carboxyvinyl)-3-phosphoshikimate = chorismate + phosphate. It functions in the pathway metabolic intermediate biosynthesis; chorismate biosynthesis; chorismate from D-erythrose 4-phosphate and phosphoenolpyruvate: step 7/7. Functionally, catalyzes the anti-1,4-elimination of the C-3 phosphate and the C-6 proR hydrogen from 5-enolpyruvylshikimate-3-phosphate (EPSP) to yield chorismate, which is the branch point compound that serves as the starting substrate for the three terminal pathways of aromatic amino acid biosynthesis. This reaction introduces a second double bond into the aromatic ring system. This Xanthomonas oryzae pv. oryzae (strain MAFF 311018) protein is Chorismate synthase.